A 363-amino-acid polypeptide reads, in one-letter code: Cytochrome b (363 aa).

A run of 4 helical transmembrane segments spans residues 24 to 44 (VGFS…CLAW), 68 to 90 (FVIR…IHIF), 105 to 125 (VWFI…IGYV), and 171 to 191 (LHVL…LHLF). Residues His74 and His88 each contribute to the heme b site. Heme b is bound by residues His175 and His189. An a ubiquinone-binding site is contributed by His194. Transmembrane regions (helical) follow at residues 219-239 (FYLR…YVIF), 287-307 (FLMV…ILWF), 321-341 (LILF…VLAY), and 342-362 (PIWM…VCRL).

The protein belongs to the cytochrome b family. As to quaternary structure, the main subunits of complex b-c1 are: cytochrome b, cytochrome c1 and the Rieske protein. The cofactor is heme b.

The protein resides in the mitochondrion inner membrane. In terms of biological role, component of the ubiquinol-cytochrome c reductase complex (complex III or cytochrome b-c1 complex) that is part of the mitochondrial respiratory chain. The b-c1 complex mediates electron transfer from ubiquinol to cytochrome c. Contributes to the generation of a proton gradient across the mitochondrial membrane that is then used for ATP synthesis. The polypeptide is Cytochrome b (MT-CYB) (Trypanosoma brucei brucei).